The chain runs to 294 residues: HTH-type transcriptional activator AmpR (294 aa).

The HTH lysR-type domain maps to Ile-6–Thr-63. The H-T-H motif DNA-binding region spans Phe-23–Lys-42.

This sequence belongs to the LysR transcriptional regulatory family.

It localises to the cytoplasm. Functionally, this protein is a positive regulator of gene expression of beta-lactamase (AmpC). The chain is HTH-type transcriptional activator AmpR (ampR) from Yersinia enterocolitica.